The chain runs to 555 residues: 3-oxocholest-4-en-26-oate--CoA ligase (555 aa).

ATP contacts are provided by residues 172 to 180, Asp418, Arg433, and Lys524; that span reads TGGTTGHPK. Residues 525 to 555 are disordered; it reads PDYRWAKDQTGLRPADEVYNNGDGNGAAATG. Over residues 544 to 555 the composition is skewed to low complexity; sequence NNGDGNGAAATG.

This sequence belongs to the ATP-dependent AMP-binding enzyme family.

It carries out the reaction (25S)-3-oxocholest-4-en-26-oate + ATP + CoA = (25S)-3-oxocholest-4-en-26-oyl-CoA + AMP + diphosphate. It participates in steroid metabolism; cholesterol metabolism. Involved in the degradation of the side chains of C-24 branched-chain sterols. Catalyzes the ATP-dependent CoA thioesterification of the sterol 3-oxocholest-4-en-26-oate to yield 3-oxocholest-4-en-26-oyl-CoA. It can also use beta-sitosterol, campesterol and 3beta-hydroxy-5-cholesten-26-oate. This is 3-oxocholest-4-en-26-oate--CoA ligase from Rhodococcus rhodochrous.